A 339-amino-acid chain; its full sequence is Purple acid phosphatase 4 (339 aa).

Positions 1 to 31 (MSSKFDIGSLSIVMTLLICFLLLSLAPKLEA) are cleaved as a signal peptide. Asp53 provides a ligand contact to Fe cation. A glycan (N-linked (GlcNAc...) asparagine) is linked at Asn61. Residues Asp86 and Tyr89 each contribute to the Fe cation site. Asp86 serves as a coordination point for Zn(2+). Zn(2+) is bound by residues Asn124 and His218. His227 serves as the catalytic Proton donor. His253 provides a ligand contact to Zn(2+). 253–255 (HDH) serves as a coordination point for substrate. His255 lines the Fe cation pocket. An N-linked (GlcNAc...) asparagine glycan is attached at Asn284.

Belongs to the metallophosphoesterase superfamily. Purple acid phosphatase family. Homodimer. It depends on Fe cation as a cofactor. Zn(2+) is required as a cofactor. As to expression, expressed in roots, stems, leaves, flowers and siliques.

The protein resides in the secreted. It carries out the reaction a phosphate monoester + H2O = an alcohol + phosphate. This is Purple acid phosphatase 4 (PAP4) from Arabidopsis thaliana (Mouse-ear cress).